A 221-amino-acid polypeptide reads, in one-letter code: Abscisic acid receptor PYL1 (221 aa).

Positions 1 to 11 are enriched in low complexity; that stretch reads MANSESSSSPV. Positions 1 to 22 are disordered; the sequence is MANSESSSSPVNEEENSQRIST. A2 carries the post-translational modification N-acetylalanine. Residues 50–206 form an START-like region; that stretch reads YQLGNGRCSS…NLQKLASITE (157 aa). Abscisate-binding positions include K86, 116–121, 143–149, and E171; these read ANTSRE and RLRNYKS. The short motif at 112–116 is the Gate loop element; it reads SGLPA. The Latch loop motif lies at 142–144; it reads HRL.

Belongs to the PYR/PYL/RCAR abscisic acid intracellular receptor family. Homodimer. Binds ABA on one subunit only. Interacts with HAB1, ABI1 and ABI2, and possibly with other PP2Cs. Binds to CARs protein in an ABA-independent manner, both at the plasma membrane and in the nucleus. Interacts directly with CAR1 and CAR4.

It is found in the cytoplasm. The protein localises to the nucleus. It localises to the cell membrane. In terms of biological role, receptor for abscisic acid (ABA) required for ABA-mediated responses such as stomatal closure and germination inhibition. Inhibits the activity of group-A protein phosphatases type 2C (PP2Cs) when activated by ABA. Can be activated by both (-)-ABA and (+)-ABA. The chain is Abscisic acid receptor PYL1 (PYL1) from Arabidopsis thaliana (Mouse-ear cress).